Here is a 646-residue protein sequence, read N- to C-terminus: MKPTLYTATGECVTPGRELGKGGEGAVYDINEFVDSVAKIYHTPPPALKQDKLAFMAATADAQLLNYVAWPQATLHGGRGGKVIGFMMPKVSGKEPIHMIYSPAHRRQSYPHCAWDFLLYVARNIASSFATVHEHGHVVGDVNQNSFMVGRDSKVVLIDSDSFQINANGTLHLCEVGVSHFTPPELQTLPSFVGFERTANHDNFGLALLIFHVLFGGRHPYSGVPLISDAGNALETDIAHFRYAYASDNQRRGLKPPPRSIPLSMLPGDVEAMFQQAFTESGVATARPTAKAWVAALDLLRQQLKKCTVSAMHVYPGHLTDCPWCALDNQGVIYFIDLGEEVITTSGDFVLAKVWAMVMASVAPPALQLPLPDHFQPTGRPLPLGLLRREYIILIEIALSALSLLLCGLQAEPRYIILVPVLAAIWIIGSLTSKVYKAEIQQRREAFNRAKMDYDHLVSQIQQLGGLEGFIAKRAMLEKMKDEILGLPEEEKRALAALHDTARERQKQKFLEGFFIDAASIPGVGPARKAALRSFGIETAADVTRRGVKQVKGFGDHLTQAVIDWKASCERRFVFRPNEAVTPAERQAVMAKMAAKRHRLESALTVGATELQRFRLHAPARTMPLMEPLRQAAEKLAQAQADLSRC.

Residues 13-300 enclose the Protein kinase domain; sequence VTPGRELGKG…KAWVAALDLL (288 aa). ATP is bound by residues 19-27 and Lys-39; that span reads LGKGGEGAV. Asp-141 (proton acceptor) is an active-site residue.

Autophosphorylated.

In terms of biological role, probable serine/threonine kinase. The chain is Protein kinase YegI (yegI) from Escherichia coli O157:H7.